Here is a 269-residue protein sequence, read N- to C-terminus: Tryptophan synthase alpha chain (269 aa).

Active-site proton acceptor residues include E49 and D60.

Belongs to the TrpA family. As to quaternary structure, tetramer of two alpha and two beta chains.

It carries out the reaction (1S,2R)-1-C-(indol-3-yl)glycerol 3-phosphate + L-serine = D-glyceraldehyde 3-phosphate + L-tryptophan + H2O. The protein operates within amino-acid biosynthesis; L-tryptophan biosynthesis; L-tryptophan from chorismate: step 5/5. Functionally, the alpha subunit is responsible for the aldol cleavage of indoleglycerol phosphate to indole and glyceraldehyde 3-phosphate. The protein is Tryptophan synthase alpha chain of Actinobacillus pleuropneumoniae serotype 3 (strain JL03).